A 594-amino-acid polypeptide reads, in one-letter code: Arrestin domain-containing protein C584.15c (594 aa).

Positions 368–398 (NPQLQSGFTTPNLSRRNSSDFGPNSPVNIHS) are enriched in polar residues. Disordered stretches follow at residues 368–417 (NPQL…NSNA) and 531–594 (EATR…RGVR). Low complexity predominate over residues 404 to 417 (SGQQPSSPASNSNA). Polar residues predominate over residues 534–552 (RPSSPTESVEIPSNTTTIA). Over residues 565–574 (PSTPAPPLPS) the composition is skewed to pro residues. A Phosphoserine modification is found at serine 584.

The protein belongs to the arrestin family.

This is Arrestin domain-containing protein C584.15c from Schizosaccharomyces pombe (strain 972 / ATCC 24843) (Fission yeast).